The following is a 316-amino-acid chain: MEPVHYSVQGNNILQIFTENFHKEDPVLFLDGTAGEGGHSLLFLKGFPNSKVILCDRDPVMLSRALARLVDFKERVVSIQTNFSEIDSNLLSSHGINDSPQGILLDLGISTFHLFHSGRGFSFKEAEPLDMRLTPNIGINAEDVINTYSKDRLMHIFYTYGEERWSKKIAEVIVERRKQNLISYTSELADLISKIIPRKLWPPGRHPATRIFQALRIEVNQELTHIEKGLDSLLNLLRPEGVIQVISFHSLEDRIVKNSLRNYAKQNGFELLTKKPILPSEEETKENPASRSAKLRVLRKTKSADKKYKKENSKEE.

S-adenosyl-L-methionine contacts are provided by residues 37 to 39 (GGH), Asp-56, Phe-83, Asp-106, and His-113. Residues 276-316 (PILPSEEETKENPASRSAKLRVLRKTKSADKKYKKENSKEE) form a disordered region. Residues 302-316 (KSADKKYKKENSKEE) are compositionally biased toward basic and acidic residues.

Belongs to the methyltransferase superfamily. RsmH family.

The protein resides in the cytoplasm. It catalyses the reaction cytidine(1402) in 16S rRNA + S-adenosyl-L-methionine = N(4)-methylcytidine(1402) in 16S rRNA + S-adenosyl-L-homocysteine + H(+). Its function is as follows. Specifically methylates the N4 position of cytidine in position 1402 (C1402) of 16S rRNA. The chain is Ribosomal RNA small subunit methyltransferase H from Leptospira borgpetersenii serovar Hardjo-bovis (strain L550).